A 273-amino-acid polypeptide reads, in one-letter code: Flagellin FljM (273 aa).

This sequence belongs to the bacterial flagellin family. In C.crescentus, the flagellar filament is composed of multiple flagellins of 29 kDa; 27 kDa and 25 kDa.

The protein localises to the secreted. It is found in the bacterial flagellum. Flagellin is the subunit protein which polymerizes to form the filaments of bacterial flagella. The protein is Flagellin FljM (fljM) of Caulobacter vibrioides (strain ATCC 19089 / CIP 103742 / CB 15) (Caulobacter crescentus).